The following is a 441-amino-acid chain: 5-hydroxytryptamine receptor 3B (441 aa).

The N-terminal stretch at 1-21 is a signal peptide; that stretch reads MLSSVMAPLWACILVAAGILA. Residues 22–238 are Extracellular-facing; sequence TDTHHPQDSA…IQFNVVMRRH (217 aa). N-linked (GlcNAc...) asparagine glycans are attached at residues Asn-52, Asn-96, Asn-138, Asn-168, and Asn-203. Cys-155 and Cys-169 are joined by a disulfide. Residues 239–259 traverse the membrane as a helical segment; the sequence is PLVYVVSLLIPSIFLMLVDLG. At 260-268 the chain is on the cytoplasmic side; the sequence is SFYLPPNCR. A helical membrane pass occupies residues 269 to 286; sequence ARIVFKTSVLVGYTVFRV. A glycan (N-linked (GlcNAc...) asparagine) is linked at Asn-287. Over 287-303 the chain is Extracellular; that stretch reads NMSNQVPRSVGSTPLIG. Residues 304-324 form a helical membrane-spanning segment; sequence HFFTICMAFLVLSLAKSIVLV. Topologically, residues 325 to 414 are cytoplasmic; the sequence is KFLHDEQRGG…WLVLLSRFDR (90 aa). Residues 381-413 are HA-stretch; determines single-channel conductance in 5-HT3 receptors; that stretch reads VWSQLQSISNYLQTQDQTDQQEAEWLVLLSRFD. A helical transmembrane segment spans residues 415 to 435; the sequence is LLFQSYLFMLGIYTITLCSLW. Residues 436 to 441 lie on the Extracellular side of the membrane; the sequence is ALWGGV.

Belongs to the ligand-gated ion channel (TC 1.A.9) family. 5-hydroxytryptamine receptor (TC 1.A.9.2) subfamily. HTR3B sub-subfamily. In terms of assembly, forms homopentameric as well as heteropentameric serotonin-activated cation-selective channel complexes with HTR3A. The homomeric complex is not functional. Heteropentameric complexes display properties which resemble that of neuronal serotonin-activated channels in vivo. Post-translationally, N-glycosylation required for membrane localization. Expressed in the brain cortex, in the caudate nucleus, the hippocampus, the thalamus and the amygdala. Detected in the kidney and testis as well as in monocytes of the spleen, small and large intestine, uterus, prostate, ovary and placenta.

It is found in the postsynaptic cell membrane. The protein resides in the cell membrane. It catalyses the reaction Na(+)(in) = Na(+)(out). The enzyme catalyses K(+)(in) = K(+)(out). It carries out the reaction Ca(2+)(in) = Ca(2+)(out). Forms serotonin (5-hydroxytryptamine/5-HT3)-activated cation-selective channel complexes, which when activated cause fast, depolarizing responses in neurons. The protein is 5-hydroxytryptamine receptor 3B of Homo sapiens (Human).